We begin with the raw amino-acid sequence, 534 residues long: GMP synthase [glutamine-hydrolyzing] (534 aa).

In terms of domain architecture, Glutamine amidotransferase type-1 spans 4-202 (KILILDFGSQ…VLEIAKAQPD (199 aa)). The active-site Nucleophile is C81. Catalysis depends on residues H176 and E178. The GMPS ATP-PPase domain maps to 203-402 (WVMKDHVAEA…LGLPHDMVYR (200 aa)). 230 to 236 (SGGVDSS) provides a ligand contact to ATP.

Homodimer.

It carries out the reaction XMP + L-glutamine + ATP + H2O = GMP + L-glutamate + AMP + diphosphate + 2 H(+). Its pathway is purine metabolism; GMP biosynthesis; GMP from XMP (L-Gln route): step 1/1. Its function is as follows. Catalyzes the synthesis of GMP from XMP. The chain is GMP synthase [glutamine-hydrolyzing] from Methylibium petroleiphilum (strain ATCC BAA-1232 / LMG 22953 / PM1).